The sequence spans 255 residues: Pimeloyl-[acyl-carrier protein] methyl ester esterase (255 aa).

Substrate contacts are provided by residues tryptophan 18, 78-79 (SL), and 139-143 (FLALD). Residue serine 78 is the Nucleophile of the active site. Catalysis depends on residues aspartate 203 and histidine 233. Substrate is bound at residue histidine 233.

This sequence belongs to the AB hydrolase superfamily. Carboxylesterase BioH family. In terms of assembly, monomer.

The protein localises to the cytoplasm. It carries out the reaction 6-carboxyhexanoyl-[ACP] methyl ester + H2O = 6-carboxyhexanoyl-[ACP] + methanol + H(+). It participates in cofactor biosynthesis; biotin biosynthesis. Functionally, the physiological role of BioH is to remove the methyl group introduced by BioC when the pimeloyl moiety is complete. It allows to synthesize pimeloyl-ACP via the fatty acid synthetic pathway through the hydrolysis of the ester bonds of pimeloyl-ACP esters. The sequence is that of Pimeloyl-[acyl-carrier protein] methyl ester esterase from Xylella fastidiosa (strain M23).